The sequence spans 97 residues: Nucleoid-associated protein HP_0035 (97 aa).

This sequence belongs to the YbaB/EbfC family. In terms of assembly, homodimer.

The protein localises to the cytoplasm. It is found in the nucleoid. In terms of biological role, binds to DNA and alters its conformation. May be involved in regulation of gene expression, nucleoid organization and DNA protection. This chain is Nucleoid-associated protein HP_0035, found in Helicobacter pylori (strain ATCC 700392 / 26695) (Campylobacter pylori).